A 216-amino-acid polypeptide reads, in one-letter code: Glutathione S-transferase 1, isoform B (216 aa).

Residues 1-80 (MDFYYLPGSA…YLVEKYGKPC (80 aa)) form the GST N-terminal domain. Glutathione contacts are provided by residues S9, 50–52 (HCV), and 64–66 (ESR). In terms of domain architecture, GST C-terminal spans 89 to 210 (DPQKRAIVNQ…RSWAEAARPF (122 aa)).

Belongs to the GST superfamily. Theta family. Homodimer.

The enzyme catalyses RX + glutathione = an S-substituted glutathione + a halide anion + H(+). Conjugation of reduced glutathione to a wide number of exogenous and endogenous hydrophobic electrophiles. The sequence is that of Glutathione S-transferase 1, isoform B from Anopheles gambiae (African malaria mosquito).